A 116-amino-acid polypeptide reads, in one-letter code: Large ribosomal subunit protein bL19 (116 aa).

This sequence belongs to the bacterial ribosomal protein bL19 family.

In terms of biological role, this protein is located at the 30S-50S ribosomal subunit interface and may play a role in the structure and function of the aminoacyl-tRNA binding site. This chain is Large ribosomal subunit protein bL19, found in Pseudomonas aeruginosa (strain LESB58).